The chain runs to 322 residues: tRNA-specific adenosine deaminase subunit TAD3 (322 aa).

The CMP/dCMP-type deaminase domain occupies 162-283; that stretch reads EVRNELSRAS…EMQRTGSLKL (122 aa). Residues H216, C254, C257, and C322 each contribute to the Zn(2+) site.

Belongs to the cytidine and deoxycytidylate deaminase family. ADAT3 subfamily. In terms of assembly, heterodimer with TAD2.

The protein resides in the cytoplasm. The protein localises to the nucleus. It is found in the peroxisome. In terms of biological role, structural subunit of tRNA-specific adenosine deaminase, which deaminates adenosine-34 (the first, also called wobble position of the anticodon) to inosine in many tRNAs. Inosine-34 allows the decoding of 3 different nucleotides at the third position of mRNA codons, as inosine is able to pair with U, C, and A. This is tRNA-specific adenosine deaminase subunit TAD3 (TAD3) from Saccharomyces cerevisiae (strain ATCC 204508 / S288c) (Baker's yeast).